Reading from the N-terminus, the 178-residue chain is ATP synthase subunit delta (178 aa).

This sequence belongs to the ATPase delta chain family. F-type ATPases have 2 components, F(1) - the catalytic core - and F(0) - the membrane proton channel. F(1) has five subunits: alpha(3), beta(3), gamma(1), delta(1), epsilon(1). F(0) has three main subunits: a(1), b(2) and c(10-14). The alpha and beta chains form an alternating ring which encloses part of the gamma chain. F(1) is attached to F(0) by a central stalk formed by the gamma and epsilon chains, while a peripheral stalk is formed by the delta and b chains.

It localises to the cell membrane. In terms of biological role, f(1)F(0) ATP synthase produces ATP from ADP in the presence of a proton or sodium gradient. F-type ATPases consist of two structural domains, F(1) containing the extramembraneous catalytic core and F(0) containing the membrane proton channel, linked together by a central stalk and a peripheral stalk. During catalysis, ATP synthesis in the catalytic domain of F(1) is coupled via a rotary mechanism of the central stalk subunits to proton translocation. Its function is as follows. This protein is part of the stalk that links CF(0) to CF(1). It either transmits conformational changes from CF(0) to CF(1) or is implicated in proton conduction. This is ATP synthase subunit delta from Streptococcus agalactiae serotype V (strain ATCC BAA-611 / 2603 V/R).